The chain runs to 379 residues: 3-dehydroquinate synthase (379 aa).

Residues 67–72 (SGEKNK), 101–105 (GVVLD), 125–126 (TT), Lys138, and Lys147 contribute to the NAD(+) site. The Zn(2+) site is built by Glu180, His242, and His258.

The protein belongs to the sugar phosphate cyclases superfamily. Dehydroquinate synthase family. Requires NAD(+) as cofactor. The cofactor is Co(2+). Zn(2+) is required as a cofactor.

It localises to the cytoplasm. The catalysed reaction is 7-phospho-2-dehydro-3-deoxy-D-arabino-heptonate = 3-dehydroquinate + phosphate. It participates in metabolic intermediate biosynthesis; chorismate biosynthesis; chorismate from D-erythrose 4-phosphate and phosphoenolpyruvate: step 2/7. Its function is as follows. Catalyzes the conversion of 3-deoxy-D-arabino-heptulosonate 7-phosphate (DAHP) to dehydroquinate (DHQ). This is 3-dehydroquinate synthase from Chlamydia abortus (strain DSM 27085 / S26/3) (Chlamydophila abortus).